Consider the following 1526-residue polypeptide: uncharacterized protein (1526 aa).

WD repeat units follow at residues 334 to 376 (CTKE…EHIS), 862 to 901 (KILG…ELLT), 904 to 945 (GHNS…KTFK), 946 to 985 (GHTS…CLYI), 988 to 1027 (GHTG…CFYI), 1030 to 1069 (GHTS…CLYT), 1072 to 1111 (GHTS…CLYT), 1114 to 1153 (GYTS…CLYT), 1156 to 1195 (GHTN…CLYI), 1198 to 1237 (GHTS…CLCT), 1240 to 1279 (GHTS…CLHT), 1282 to 1321 (GHTN…CLHT), 1324 to 1363 (GHTS…CLYT), 1366 to 1405 (GHTN…CLYT), 1408 to 1447 (GHNN…CLYT), and 1450 to 1491 (GHIN…KTLK). The 40-residue stretch at 823–862 (MVLEGRDLSHTVIIGADFTNTSLRCVNFTEANLAYSVFTK) folds into the Pentapeptide repeat domain.

This is an uncharacterized protein from Nostoc sp. (strain PCC 7120 / SAG 25.82 / UTEX 2576).